A 1388-amino-acid chain; its full sequence is Retrotransposon Gag-like protein 9 (1388 aa).

Disordered regions lie at residues 491–511 (ATAS…GAMS), 769–790 (TPLM…ASSS), 895–918 (GGVS…RRPS), 1100–1138 (TDSG…PKEV), and 1336–1388 (AMGN…HTNK). Positions 1103–1123 (GEASTSHINITASGSKPTSHM) are enriched in polar residues. Positions 1359 to 1374 (YLKEHGDPQEGLHDHL) are enriched in basic and acidic residues.

The sequence is that of Retrotransposon Gag-like protein 9 from Homo sapiens (Human).